The primary structure comprises 905 residues: MDSHNNIDQSVSELLSDPASVQQSYNSQLRGPEFDQQRQIRNQVSPFNKMTDTIDNDNIPLSSDYDKLYQQFSIPSQQQYENNSDNVYKTNNDLAALASPLNMDLDLAPSDQQQQPQQSQQQFLNDFSNLQPHLNNSQEQVQLNGLTSNILSNPQITVNMPGAYHQNYNCDQMEIDDSPPFTIESDLYFEQQTDNNSIVTSNRVHNQPDVESMFNNQLSVPSLQRTELSPQQHETNVTTGRPQESAFGSFDNNSRVSSFANVNNAGTNLFVNGKDLYFDDESHHRTGRLRNGSIDSYYAANVINHQLHLQQQTQAQAQAHQQQQQQSQQQHSPQDLASHTSLPSKSIYNELSPLTTTTSRASSIQSGQPSFFSAQQYFSRNSMDQVPSSLHRPSFDLYNHRPSIDSQHSQQSQQRNARYTSFTSSISNILPFMSEKNTNHNNRSPPTPPTSTSSPQNLLSSNQSRHLIRSIFKTNPTPIVSDAGNSNGNIVNGGSGTIDAENLPDAPYASGTINDSEFLILSSPTKEEPEDELMQPKKVKKPKRSLFTRFKTPVKQEQPDSEMAVSAPVDELKPDETVIDMVGNISSHHSSGTPSITTGAGGNTLEHSISESSFQEPDYAALFENVGKRKNKSYRKPKGKTKEEEQQQQQLPLSSGTAGGTSSNNSTGTVEKTLFFNKTKIKKEPASERSSLLDNASAGNASASSSEASSIQNAIGSDDHNGPPLTSAPTSSTLANASKRILSSKLISKKKSTSKLKEYTAAELEDMCTVSSLETPVATMISKGIEVEVDLASLDLPPDTKIFPTSIINNKNRTRGRKENKEADLSDTSKIYLCNLCQRRFKRHEHLKRHFRSLHTFEKPYNCDICHKKFSRSDNLNQHLKIHKQEDEKDCADAETGVGMDDASG.

Polar residues predominate over residues 1 to 29 (MDSHNNIDQSVSELLSDPASVQQSYNSQL). Disordered regions lie at residues 1–34 (MDSHNNIDQSVSELLSDPASVQQSYNSQLRGPEF), 312–340 (QTQAQAQAHQQQQQQSQQQHSPQDLASHT), 383–419 (MDQVPSSLHRPSFDLYNHRPSIDSQHSQQSQQRNARY), 434–460 (SEKNTNHNNRSPPTPPTSTSSPQNLLS), 525–544 (TKEEPEDELMQPKKVKKPKR), 584–613 (NISSHHSSGTPSITTGAGGNTLEHSISESS), 625–671 (NVGK…GTVE), and 685–733 (PASE…TSST). Residues 312 to 334 (QTQAQAQAHQQQQQQSQQQHSPQ) show a composition bias toward low complexity. Residues 439–460 (NHNNRSPPTPPTSTSSPQNLLS) show a composition bias toward low complexity. The segment covering 584–598 (NISSHHSSGTPSITT) has biased composition (polar residues). Residues 628–639 (KRKNKSYRKPKG) show a composition bias toward basic residues. Low complexity-rich tracts occupy residues 647-669 (QQQQLPLSSGTAGGTSSNNSTGT) and 690-710 (SSLLDNASAGNASASSSEASS). C2H2-type zinc fingers lie at residues 832–855 (YLCNLCQRRFKRHEHLKRHFRSLH) and 861–883 (YNCDICHKKFSRSDNLNQHLKIH). The tract at residues 885-905 (QEDEKDCADAETGVGMDDASG) is disordered.

The protein localises to the nucleus. In terms of biological role, transcription factor that activates stress response genes via SLE (STRE-like) elements. Required for adaptation to weak acid stress such as acetic acid stress, but seems not involved in the response to heat, osmotic, ethanol, nutrient, oxidative, or heavy-metal stress. Activates a subset of the genes that are repressed by NRG1. The polypeptide is Transcriptional regulator MNL1 (MNL1) (Candida albicans (strain SC5314 / ATCC MYA-2876) (Yeast)).